The following is a 297-amino-acid chain: Bifunctional protein FolD 2 (297 aa).

Residues 177 to 179 (GKS), Ile202, and Ile243 contribute to the NADP(+) site.

It belongs to the tetrahydrofolate dehydrogenase/cyclohydrolase family. As to quaternary structure, homodimer.

It carries out the reaction (6R)-5,10-methylene-5,6,7,8-tetrahydrofolate + NADP(+) = (6R)-5,10-methenyltetrahydrofolate + NADPH. The catalysed reaction is (6R)-5,10-methenyltetrahydrofolate + H2O = (6R)-10-formyltetrahydrofolate + H(+). Its pathway is one-carbon metabolism; tetrahydrofolate interconversion. Catalyzes the oxidation of 5,10-methylenetetrahydrofolate to 5,10-methenyltetrahydrofolate and then the hydrolysis of 5,10-methenyltetrahydrofolate to 10-formyltetrahydrofolate. The chain is Bifunctional protein FolD 2 from Rhizorhabdus wittichii (strain DSM 6014 / CCUG 31198 / JCM 15750 / NBRC 105917 / EY 4224 / RW1) (Sphingomonas wittichii).